A 438-amino-acid polypeptide reads, in one-letter code: Plasmalemma vesicle-associated protein (438 aa).

Residues 1–26 are Cytoplasmic-facing; sequence MGLSMDRSPYSRTGDRDRGCWYYLRY. A helical; Signal-anchor for type II membrane protein membrane pass occupies residues 27 to 47; that stretch reads FFLFVSLIQFLIILGLVLFMI. The Extracellular portion of the chain corresponds to 48 to 438; it reads YGNVHATTES…LVNPAVPPSG (391 aa). 4 N-linked (GlcNAc...) asparagine glycosylation sites follow: asparagine 82, asparagine 88, asparagine 112, and asparagine 150. The stretch at 289-383 forms a coiled coil; the sequence is AGIERVTREN…TEVDVRISAL (95 aa). The tract at residues 393–438 is disordered; sequence PAIQPRLPGPPPNPPPIDPASLEEFKKRILESQRPPLVNPAVPPSG. Pro residues-rich tracts occupy residues 399-410 and 429-438; these read LPGPPPNPPPID and LVNPAVPPSG.

Homodimer. In terms of tissue distribution, expressed in lung (alveolar endothelial and bronchial epithelial cells), kidney (endothelium of peritubular capillaries), spleen, liver, adrenal (endothelial cells of the zona reticularis of the cortex and chromaffin cells in the medulla), pancreas (islets of Langerhans), testis (germ cells, interstitial cells in neonatal testis and spermatids), ovary (stromal endothelial, thecal layer of developing follicles, luteal cells within the corpus luteum), intestine (endothelium of capillaries of the intestinal villi) and pituitary (pituicyte cells in the neural lobe) (at protein level). Expressed in lung, kidney, spleen, liver, adrenal, testis, heart, muscle, pituitary, thyroid and ovary.

The protein localises to the cell membrane. It is found in the membrane. Its subcellular location is the caveola. The protein resides in the cytoplasm. It localises to the perinuclear region. In terms of biological role, endothelial cell-specific membrane protein involved in the formation of the diaphragms that bridge endothelial fenestrae. It is also required for the formation of stomata of caveolae and transendothelial channels. Functions in microvascular permeability, endothelial fenestrae contributing to the passage of water and solutes and regulating transcellular versus paracellular flow in different organs. Plays a specific role in embryonic development. The sequence is that of Plasmalemma vesicle-associated protein (Plvap) from Rattus norvegicus (Rat).